Here is a 262-residue protein sequence, read N- to C-terminus: Cutinase 1 (262 aa).

Y61 contributes to the poly(ethylene terephthalate) binding site. Residue S131 is the Nucleophile of the active site. Poly(ethylene terephthalate) is bound by residues M132 and W156. Catalysis depends on charge relay system residues D177 and H209. A disulfide bond links C242 and C260.

This sequence belongs to the AB hydrolase superfamily.

It localises to the secreted. The protein localises to the periplasm. The enzyme catalyses (ethylene terephthalate)(n) + H2O = (ethylene terephthalate)(n-1) + 4-[(2-hydroxyethoxy)carbonyl]benzoate + H(+). It carries out the reaction a butanoate ester + H2O = an aliphatic alcohol + butanoate + H(+). The catalysed reaction is an acetyl ester + H2O = an aliphatic alcohol + acetate + H(+). It catalyses the reaction cutin + H2O = cutin monomers.. Catalyzes the hydrolysis of cutin, a polyester that forms the structure of plant cuticle. Shows esterase activity towards p-nitrophenol-linked aliphatic esters (pNP-aliphatic esters). Capable of degrading the plastic poly(ethylene terephthalate) (PET), the most abundant polyester plastic in the world. Capable of degrading the bioplastic poly(lactic acid) (PLLA). This Thermobifida cellulosilytica protein is Cutinase 1.